The sequence spans 242 residues: ATP synthase subunit a (242 aa).

A run of 6 helical transmembrane segments spans residues 31–51 (IYML…FYNW), 84–104 (FIPL…LGMT), 114–134 (IIVT…VGFV), 140–160 (FLTL…MIVI), 189–209 (VIAS…IPLM), and 210–230 (VILI…FTIL).

Belongs to the ATPase A chain family. F-type ATPases have 2 components, CF(1) - the catalytic core - and CF(0) - the membrane proton channel. CF(1) has five subunits: alpha(3), beta(3), gamma(1), delta(1), epsilon(1). CF(0) has three main subunits: a(1), b(2) and c(9-12). The alpha and beta chains form an alternating ring which encloses part of the gamma chain. CF(1) is attached to CF(0) by a central stalk formed by the gamma and epsilon chains, while a peripheral stalk is formed by the delta and b chains.

The protein localises to the cell inner membrane. In terms of biological role, key component of the proton channel; it plays a direct role in the translocation of protons across the membrane. The chain is ATP synthase subunit a from Rickettsia canadensis (strain McKiel).